The following is a 338-amino-acid chain: 4-hydroxythreonine-4-phosphate dehydrogenase (338 aa).

Histidine 136 and threonine 137 together coordinate substrate. Residues histidine 173, histidine 218, and histidine 273 each contribute to the a divalent metal cation site. Lysine 281, asparagine 290, and arginine 299 together coordinate substrate.

It belongs to the PdxA family. As to quaternary structure, homodimer. It depends on Zn(2+) as a cofactor. Mg(2+) is required as a cofactor. Requires Co(2+) as cofactor.

It localises to the cytoplasm. The catalysed reaction is 4-(phosphooxy)-L-threonine + NAD(+) = 3-amino-2-oxopropyl phosphate + CO2 + NADH. Its pathway is cofactor biosynthesis; pyridoxine 5'-phosphate biosynthesis; pyridoxine 5'-phosphate from D-erythrose 4-phosphate: step 4/5. Catalyzes the NAD(P)-dependent oxidation of 4-(phosphooxy)-L-threonine (HTP) into 2-amino-3-oxo-4-(phosphooxy)butyric acid which spontaneously decarboxylates to form 3-amino-2-oxopropyl phosphate (AHAP). This chain is 4-hydroxythreonine-4-phosphate dehydrogenase, found in Ralstonia nicotianae (strain ATCC BAA-1114 / GMI1000) (Ralstonia solanacearum).